The primary structure comprises 253 residues: 3-deoxy-manno-octulosonate cytidylyltransferase (253 aa).

The protein belongs to the KdsB family.

It is found in the cytoplasm. The catalysed reaction is 3-deoxy-alpha-D-manno-oct-2-ulosonate + CTP = CMP-3-deoxy-beta-D-manno-octulosonate + diphosphate. Its pathway is nucleotide-sugar biosynthesis; CMP-3-deoxy-D-manno-octulosonate biosynthesis; CMP-3-deoxy-D-manno-octulosonate from 3-deoxy-D-manno-octulosonate and CTP: step 1/1. It functions in the pathway bacterial outer membrane biogenesis; lipopolysaccharide biosynthesis. Its function is as follows. Activates KDO (a required 8-carbon sugar) for incorporation into bacterial lipopolysaccharide in Gram-negative bacteria. The polypeptide is 3-deoxy-manno-octulosonate cytidylyltransferase (Acidithiobacillus ferrooxidans (strain ATCC 23270 / DSM 14882 / CIP 104768 / NCIMB 8455) (Ferrobacillus ferrooxidans (strain ATCC 23270))).